Reading from the N-terminus, the 925-residue chain is MTLNNLQALLRRVAAREDSGHVVVYGMGNTKAFKSYSYQDLLRVAIKASVALRKTSDLHPGSVILLHFDNHWDNIVWFWAASFAGCLPAISASFSNDASQRTAHIERLSTTLMHPLCLTNERIMADFAGQDAVQPLAVETLVLNGDVSFEALPQEHPEPSLSDDALLLFTSGSSGNSKGVCLSHGQILASISGKYAVRPLPDNTSFLNWVGLDHVAAIVEIHLQAMYALKTQVHVPAADILSSPATFLQLLEKHRVSRTFAPNFFLAKLRDLLQENDSLPEPRRWDLRSLEYVASGGEANVTKTCDRLSEYLVAFGAPKDVIVPGFGMTETCAGSIFNTRCPEYDKSRSAEFASVGTCMPGISMRVTDLSNNALPSGEIGHLQLTGPVVFKRYFNNTSATQEAFTPDGWFKTGDMGCIDENGCLTLTGRAKENMIINGVNHSPHEIETALDKIPGLTPSYSCCFSFFPSGGETEEICVVYLPTYSPDDLAARAQTADAISKTVLMSTGSRPHVLPLEREALPKSSLGKLSRAKIKAAYEKGEYATYQNANNELMRRYRESTRAEPQNDLEKTLLEVFTRSLSITDDAFDVKTPIFDVGINSVELIRLKRDIEDHLGMAASAIPMIMLMTHSTVRDLATALEKLQGPREYDPVVTLQSHGHKNPLWLVHPGAGEVLVFINLAQYIVDRPVYALRARGFNDGEQPFETIEEATASYYNGIRSRQPHGPYALAGYCYGSMLAFEVAKMLESHGEEVRFLGSFNLPPHIKMRMRELDWKECLLHLAYFLDLVSQERSREMSVELAGLSHDEILDSVIQNANMERYAELSLNRPLLVRWADVAYELHRMAFDYDPAGCVAGMDVFFSIPLAIAAASKTEWRNVHLSQWEDFTRTVPKFHDVAGEHYSMIGPDHVFSFQKTLRKALDERGM.

The adenylation (A) domain stretch occupies residues 15-436 (AREDSGHVVV…TGRAKENMII (422 aa)). Residues 564–644 (EPQNDLEKTL…DLATALEKLQ (81 aa)) form the Carrier domain. Ser601 is subject to O-(pantetheine 4'-phosphoryl)serine. The thioesterase (TE) domain stretch occupies residues 663 to 909 (PLWLVHPGAG…HYSMIGPDHV (247 aa)).

Belongs to the NRP synthetase family. As to expression, apvA specifically produces aspulvinone E in hyphea, in contrast to melA which produces aspulvinone E in conidia where it is converted to UV-protective Asp-melanin.

It catalyses the reaction 2 3-(4-hydroxyphenyl)pyruvate + AH2 + 2 ATP + O2 = aspulvinone E + A + 2 AMP + CO2 + 2 diphosphate + H2O + H(+). It participates in secondary metabolite biosynthesis. In terms of biological role, nonribosomal peptide synthetase; part of the gene cluster that mediates the biosynthesis of aspulvinones. The nonribosomal peptide synthetase apvA is responsible for the production of aspulvinone E, the core structure of aspulvinones. ApvA first activates 4-hydroxyphenylpyruvate (HPPA) through its A domain to AMP-HPPA. The HPPA unit is then loaded to the T domain and eventually transferred to the TE domain. Upon loading of another HPPA unit to the T domain, the TE domain promotes the enolate formation on the unit attached. The next step involves head to tail Claisen condensation, followed by the keto-enol tautermerization and a nucleophilic attack on the carbonyl carbon to yield the furanone partial structure. A spontaneous oxidation at the beta-carbon of the thioester might occur in aerobic condition. The TE domain then catalyzes the hydrolysis of the thioester, followed by spontaneous decarboxylation, dehydroxylation and keto-enol tautermerization to give the aspulvinone core. Aspulvinone E is highly unstable and converted to isoaspulvinone E in the presence of light. The structural diversity of the aspulvinones suggests that other tailoring enzymes are involved and have still to be identified. In Aspergillus terreus (strain NIH 2624 / FGSC A1156), this protein is Nonribosomal peptide synthetase apvA.